Consider the following 286-residue polypeptide: ATP synthase gamma chain (286 aa).

It belongs to the ATPase gamma chain family. As to quaternary structure, F-type ATPases have 2 components, CF(1) - the catalytic core - and CF(0) - the membrane proton channel. CF(1) has five subunits: alpha(3), beta(3), gamma(1), delta(1), epsilon(1). CF(0) has three main subunits: a, b and c.

It is found in the cell inner membrane. In terms of biological role, produces ATP from ADP in the presence of a proton gradient across the membrane. The gamma chain is believed to be important in regulating ATPase activity and the flow of protons through the CF(0) complex. The sequence is that of ATP synthase gamma chain from Flavobacterium psychrophilum (strain ATCC 49511 / DSM 21280 / CIP 103535 / JIP02/86).